We begin with the raw amino-acid sequence, 595 residues long: Probable serine/threonine-protein kinase fhkC (595 aa).

Residues 1–84 (MNSNKEETTA…MTEDNSKEED (84 aa)) form a disordered region. Low complexity predominate over residues 18-31 (EEQQQQQQPQQQEQ). Residues 32–49 (INTTTASTTSNGENTASD) are compositionally biased toward polar residues. Over residues 50-70 (NNNNSNNNNNNNTNNTNTNNN) the composition is skewed to low complexity. Residues 116 to 170 (IILGRSKGVCNYTFTSPTVSGKHCKIYRDPTVKSRNVAFVDDTSTNGTFINNEVI) enclose the FHA domain. Residues 218–479 (YDLREVLGTG…IDQALNHPWF (262 aa)) form the Protein kinase domain. Residues 224-232 (LGTGNFASV) and K247 each bind ATP. The active-site Proton acceptor is the D342. T377 is modified (phosphothreonine; by autocatalysis). The interval 494 to 595 (KLEFPPPSTN…DEHEQKKVKN (102 aa)) is disordered. Polar residues predominate over residues 508–520 (PTPNTTSSNSQLV). Residues 530–567 (DNTTDNNNNNNNNNNNNNNNNNNNTTNNSNNIDNNNGN) show a composition bias toward low complexity. Basic and acidic residues predominate over residues 585–595 (NDEHEQKKVKN).

The protein belongs to the protein kinase superfamily. CAMK Ser/Thr protein kinase family. CHK2 subfamily.

It carries out the reaction L-seryl-[protein] + ATP = O-phospho-L-seryl-[protein] + ADP + H(+). The enzyme catalyses L-threonyl-[protein] + ATP = O-phospho-L-threonyl-[protein] + ADP + H(+). This chain is Probable serine/threonine-protein kinase fhkC (fhkC), found in Dictyostelium discoideum (Social amoeba).